The primary structure comprises 550 residues: Glucose import ATP-binding protein TsgD13 (550 aa).

2 ABC transporter domains span residues 7–270 (LRME…VGRE) and 287–533 (LRAR…TGGG). An ATP-binding site is contributed by 39-46 (GENGAGKS). The segment at 529-550 (MTGGGDATATAGAQVRGLGGSS) is disordered.

This sequence belongs to the ABC transporter superfamily. As to quaternary structure, the complex is composed of two ATP-binding proteins (TsgD13), two transmembrane proteins (TsgB13 and TsgC13) and a solute-binding protein (TsgA13).

It is found in the cell membrane. It carries out the reaction D-glucose(out) + ATP + H2O = D-glucose(in) + ADP + phosphate + H(+). Part of an ABC transporter complex involved in glucose import. Responsible for energy coupling to the transport system. This is Glucose import ATP-binding protein TsgD13 (tsgD13) from Haloferax volcanii (strain ATCC 29605 / DSM 3757 / JCM 8879 / NBRC 14742 / NCIMB 2012 / VKM B-1768 / DS2) (Halobacterium volcanii).